Consider the following 451-residue polypeptide: MTLHVIETARVTPTDYSVINSANLHKLPLTFFDLPWLLFQPVKRVFFYELTESTRDHFHSIILPKLKDSLSLILRNYLPLTGHITWEPNEPKPSIIVSENGVVLVTIAESDADFSHLSGYGQRPLSELHALVPKLPVSDDSATAFSIQITLFPNQGFSIGVAAHHAVLDGKTSSTFIKAWAQICKQELQSMPENLTPSYDRSLIKYPTYLDEKMIELVRSLKEDQTNIRSLTSLPSSKLGDDVVLATLVLSRADIERLREQVKNVSPSLHLSTFVIAYAYAWTCFVKARGGNKDRSVSLLFVGDFRDRLDPKLPGTYFGNCMIPVGCYNRKAAEFMEEKGFVTAAEIISDLVKGLSSRKIETIADTFVEGFSFQSWSTQFGTIAGSTRLGVYEADFGWGRPVKVDIVSIDQGEAIAMAERRDESGGVEIGMCLKKTEMDSVVSFFNNGLHS.

H165 acts as the Proton acceptor in catalysis. The short motif at 165-169 (HAVLD) is the HXXXD motif element. Residues H270 and 272–273 (ST) each bind malonyl-CoA. D395 serves as the catalytic Proton acceptor. The DFGWG motif signature appears at 395 to 399 (DFGWG).

Belongs to the plant acyltransferase family. Phenolic glucoside malonyltransferase subfamily.

The enzyme catalyses a flavonol 7-O-beta-D-glucoside + malonyl-CoA = a flavonol 7-O-(6-O-malonyl-beta-D-glucoside) + CoA. In terms of biological role, malonyltransferase acting on xenobiotic glucosides. Has activity toward 2-Naphthol glucoside (2NAG), 1-Naphthol glucoside (1NAG), kaempferol 7-O-glucoside, hydroxycoumarin glucosides and phenol-glucosides, but not toward kaempferol 3-O-glucoside or daidzin. Prefers phenol glucosides rather than naphtol glucosides. In vivo, seems to be involved in the malonylation of 4-methylumbelliferone glucoside or 4-nitrophenyl glucoside while PMAT1 would be involved in the malonylation of 2-Naphthol glucoside. This chain is Phenolic glucoside malonyltransferase 2 (PMAT2), found in Arabidopsis thaliana (Mouse-ear cress).